We begin with the raw amino-acid sequence, 2344 residues long: Pecanex-like protein 1 (2344 aa).

Helical transmembrane passes span 33-53 (ALHL…YMAL) and 57-77 (MIIV…LKMV). Disordered regions lie at residues 101-163 (QRAK…GSSR), 271-290 (SHSY…SSSA), 306-692 (QQQR…TRAR), and 749-837 (VTRS…VQSR). Residues 143–163 (SSRNSYAGLDPSNQIGSGSSR) are compositionally biased toward polar residues. The segment covering 272-282 (HSYRKEHRPRG) has biased composition (basic residues). Residues 328–343 (RESSAGKSCPPAQSQP) show a composition bias toward polar residues. The span at 372–390 (SLRSLSTRSSGSTESYCSG) shows a compositional bias: low complexity. Residues 396-406 (NSTLSSYKSEQ) show a composition bias toward polar residues. 3 stretches are compositionally biased toward basic and acidic residues: residues 416 to 458 (LSEH…DKTA), 508 to 522 (RPPE…EQSE), and 531 to 547 (RVCK…DVRP). Residues 557-572 (TSAHKPGRRRTGKKRA) are compositionally biased toward basic residues. A compositionally biased stretch (low complexity) spans 616–638 (SIHSAHQFSSDSSSSATSHSCQS). Positions 749–758 (VTRSRNSLPS) are enriched in polar residues. Low complexity-rich tracts occupy residues 770–781 (AATGAAQASEEA) and 817–835 (LSLQ…VKVQ). The next 3 membrane-spanning stretches (helical) occupy residues 1010–1030 (ILAV…LIQG), 1035–1055 (IWVF…LKSV), and 1069–1089 (IIAY…WLLD). Asparagine 1094 is a glycosylation site (N-linked (GlcNAc...) asparagine). The helical transmembrane segment at 1119–1139 (LVIVFTLCFPIVFFIGLLPQV) threads the bilayer. N-linked (GlcNAc...) asparagine glycosylation occurs at asparagine 1158. The next 4 membrane-spanning stretches (helical) occupy residues 1163–1183 (LLAA…LYGL), 1196–1216 (HVPV…YHLS), 1269–1289 (LVVC…TVFT), and 1297–1317 (YVLY…LPQV). Asparagine 1582, asparagine 1723, asparagine 1985, and asparagine 2075 each carry an N-linked (GlcNAc...) asparagine glycan. Residues 2051–2123 (EDSDTGGGTS…SSLVRQSPAR (73 aa)) are disordered. Polar residues-rich tracts occupy residues 2061-2081 (CPGN…QGST) and 2095-2118 (PTTS…SLVR). N-linked (GlcNAc...) asparagine glycans are attached at residues asparagine 2231, asparagine 2237, and asparagine 2263.

It belongs to the pecanex family.

The protein resides in the membrane. The protein is Pecanex-like protein 1 of Mus musculus (Mouse).